The primary structure comprises 622 residues: Chaperone protein HscA homolog (622 aa).

The protein belongs to the heat shock protein 70 family.

Chaperone involved in the maturation of iron-sulfur cluster-containing proteins. Has a low intrinsic ATPase activity which is markedly stimulated by HscB. In Burkholderia lata (strain ATCC 17760 / DSM 23089 / LMG 22485 / NCIMB 9086 / R18194 / 383), this protein is Chaperone protein HscA homolog.